Consider the following 430-residue polypeptide: MIDSLDLVIDTIVAREVLDSRGNPTVEAEVLLEGGAMGRAIVPSGASTGAHEAHELRDGGDRYMGKGVGQAVNHIEERIATALCGLSALDQAAVDAAMLELDGSDNKSNLGANAILAVSMATARAAANGLGIPLYRYLGGPMANLLPVPLMNVINGGAHAANSLDFQEFMLVPHGAPSFREALRMGTEVFHTLKKLLSDKGMSTAVGDEGGFAPDLGNVEAGEILVEAISKAGYKPGEQISLALDVASTEFFENGRYAFDGGSYTSAEMVGQLEQLVEKFPIVSIEDGLAEDDWDGWKLLTERLGGKVQLVGDDLFVTNTKRLQQGIDSATANSILIKVNQIGSLTETLQAIDLAGRSGYTSVISHRSGETEDTTIADLSVATRAGQIKTGSLSRSERVAKYNQLLRIEDELGSQAVYAGAVGQGPRGKA.

Gln-167 contributes to the (2R)-2-phosphoglycerate binding site. Catalysis depends on Glu-209, which acts as the Proton donor. Positions 245, 286, and 313 each coordinate Mg(2+). (2R)-2-phosphoglycerate contacts are provided by Lys-338, Arg-367, Ser-368, and Lys-389. The active-site Proton acceptor is the Lys-338.

This sequence belongs to the enolase family. Mg(2+) is required as a cofactor.

Its subcellular location is the cytoplasm. The protein resides in the secreted. It is found in the cell surface. It catalyses the reaction (2R)-2-phosphoglycerate = phosphoenolpyruvate + H2O. It participates in carbohydrate degradation; glycolysis; pyruvate from D-glyceraldehyde 3-phosphate: step 4/5. Catalyzes the reversible conversion of 2-phosphoglycerate (2-PG) into phosphoenolpyruvate (PEP). It is essential for the degradation of carbohydrates via glycolysis. The chain is Enolase from Synechococcus sp. (strain CC9605).